The primary structure comprises 187 residues: ATP synthase subunit delta (187 aa).

This sequence belongs to the ATPase delta chain family. In terms of assembly, F-type ATPases have 2 components, F(1) - the catalytic core - and F(0) - the membrane proton channel. F(1) has five subunits: alpha(3), beta(3), gamma(1), delta(1), epsilon(1). F(0) has three main subunits: a(1), b(2) and c(10-14). The alpha and beta chains form an alternating ring which encloses part of the gamma chain. F(1) is attached to F(0) by a central stalk formed by the gamma and epsilon chains, while a peripheral stalk is formed by the delta and b chains.

It is found in the cell inner membrane. F(1)F(0) ATP synthase produces ATP from ADP in the presence of a proton or sodium gradient. F-type ATPases consist of two structural domains, F(1) containing the extramembraneous catalytic core and F(0) containing the membrane proton channel, linked together by a central stalk and a peripheral stalk. During catalysis, ATP synthesis in the catalytic domain of F(1) is coupled via a rotary mechanism of the central stalk subunits to proton translocation. Functionally, this protein is part of the stalk that links CF(0) to CF(1). It either transmits conformational changes from CF(0) to CF(1) or is implicated in proton conduction. This is ATP synthase subunit delta from Leptospira biflexa serovar Patoc (strain Patoc 1 / Ames).